The following is an 803-amino-acid chain: Leucine--tRNA ligase (803 aa).

A 'HIGH' region motif is present at residues Pro40–His51. Residues Lys575–Ser579 carry the 'KMSKS' region motif. Lys578 provides a ligand contact to ATP.

The protein belongs to the class-I aminoacyl-tRNA synthetase family.

It is found in the cytoplasm. It carries out the reaction tRNA(Leu) + L-leucine + ATP = L-leucyl-tRNA(Leu) + AMP + diphosphate. The sequence is that of Leucine--tRNA ligase from Listeria innocua serovar 6a (strain ATCC BAA-680 / CLIP 11262).